Here is a 227-residue protein sequence, read N- to C-terminus: Ribose-5-phosphate isomerase A (227 aa).

Substrate is bound by residues 26–29, 82–85, and 95–98; these read TGST, DGAD, and KGGG. Glu104 functions as the Proton acceptor in the catalytic mechanism. Residue Lys122 coordinates substrate.

This sequence belongs to the ribose 5-phosphate isomerase family. In terms of assembly, homodimer.

The enzyme catalyses aldehydo-D-ribose 5-phosphate = D-ribulose 5-phosphate. It functions in the pathway carbohydrate degradation; pentose phosphate pathway; D-ribose 5-phosphate from D-ribulose 5-phosphate (non-oxidative stage): step 1/1. In terms of biological role, catalyzes the reversible conversion of ribose-5-phosphate to ribulose 5-phosphate. In Streptococcus pyogenes serotype M2 (strain MGAS10270), this protein is Ribose-5-phosphate isomerase A.